Here is a 647-residue protein sequence, read N- to C-terminus: Acetyl-coenzyme A synthetase (647 aa).

CoA-binding positions include 190–193 (RGGR), T308, and N332. Residues 384–386 (GEP), 408–413 (DTWWQT), D497, and R512 contribute to the ATP site. Residue S520 coordinates CoA. R523 serves as a coordination point for ATP. Residues V534, H536, and V539 each coordinate Mg(2+). Position 581 (R581) interacts with CoA. K606 is modified (N6-acetyllysine).

The protein belongs to the ATP-dependent AMP-binding enzyme family. Mg(2+) is required as a cofactor. In terms of processing, acetylated. Deacetylation by the SIR2-homolog deacetylase activates the enzyme.

The catalysed reaction is acetate + ATP + CoA = acetyl-CoA + AMP + diphosphate. Functionally, catalyzes the conversion of acetate into acetyl-CoA (AcCoA), an essential intermediate at the junction of anabolic and catabolic pathways. AcsA undergoes a two-step reaction. In the first half reaction, AcsA combines acetate with ATP to form acetyl-adenylate (AcAMP) intermediate. In the second half reaction, it can then transfer the acetyl group from AcAMP to the sulfhydryl group of CoA, forming the product AcCoA. In Parvibaculum lavamentivorans (strain DS-1 / DSM 13023 / NCIMB 13966), this protein is Acetyl-coenzyme A synthetase.